A 732-amino-acid chain; its full sequence is B-cadherin (732 aa).

The propeptide occupies 1–6 (LRRQKR). 5 consecutive Cadherin domains span residues 6–114 (RDWV…KPQF), 115–227 (TQEV…APEF), 228–339 (DPKT…APVF), 340–443 (DPPL…VNDH), and 444–554 (GPEP…RVDT). Topologically, residues 6–554 (RDWVIPPIKV…SCAQKPRVDT (549 aa)) are extracellular. N137 carries an N-linked (GlcNAc...) asparagine glycan. A glycan (N-linked (GlcNAc...) asparagine) is linked at N410. The chain crosses the membrane as a helical span at residues 555-580 (GVPIVLAVLGAVLALLLVLLLLLLLV). Topologically, residues 581–732 (RRRKVVKEPL…ELYGGGEDEE (152 aa)) are cytoplasmic.

In terms of tissue distribution, expressed in a wide variety of tissues.

Its subcellular location is the cell membrane. Cadherins are calcium-dependent cell adhesion proteins. They preferentially interact with themselves in a homophilic manner in connecting cells; cadherins may thus contribute to the sorting of heterogeneous cell types. B-cadherin may have important functions in neurogenesis, in at least some epithelia, and in embryogenesis. The protein is B-cadherin (K-CAM) of Gallus gallus (Chicken).